We begin with the raw amino-acid sequence, 264 residues long: Zinc import ATP-binding protein ZnuC (264 aa).

The region spanning 11 to 226 is the ABC transporter domain; that stretch reads IELQNIKVVF…PTFIHLFGDQ (216 aa). ATP is bound at residue 43–50; sequence GPNGGGKS.

This sequence belongs to the ABC transporter superfamily. Zinc importer (TC 3.A.1.15.5) family. The complex is composed of two ATP-binding proteins (ZnuC), two transmembrane proteins (ZnuB) and a solute-binding protein (ZnuA).

It is found in the cell inner membrane. It carries out the reaction Zn(2+)(out) + ATP(in) + H2O(in) = Zn(2+)(in) + ADP(in) + phosphate(in) + H(+)(in). Functionally, part of the ABC transporter complex ZnuABC involved in zinc import. Responsible for energy coupling to the transport system. This is Zinc import ATP-binding protein ZnuC from Mannheimia succiniciproducens (strain KCTC 0769BP / MBEL55E).